The primary structure comprises 98 residues: MSVSIKPLEDRIVIKQVEAEQTTASGLVIPDTAKEKPQEGVVEAVGPGRIDDNGNRVPLDVAVGDKVIYSKYGGTEVKFGGQDYLVLSARDVLAVVVR.

It belongs to the GroES chaperonin family. Heptamer of 7 subunits arranged in a ring. Interacts with the chaperonin GroEL.

It is found in the cytoplasm. Functionally, together with the chaperonin GroEL, plays an essential role in assisting protein folding. The GroEL-GroES system forms a nano-cage that allows encapsulation of the non-native substrate proteins and provides a physical environment optimized to promote and accelerate protein folding. GroES binds to the apical surface of the GroEL ring, thereby capping the opening of the GroEL channel. This Leifsonia xyli subsp. xyli (strain CTCB07) protein is Co-chaperonin GroES.